We begin with the raw amino-acid sequence, 431 residues long: Trigger factor (431 aa).

The PPIase FKBP-type domain maps to 163–248; that stretch reads GHFAVIDFTG…LSEIKVKELP (86 aa).

This sequence belongs to the FKBP-type PPIase family. Tig subfamily.

The protein localises to the cytoplasm. It carries out the reaction [protein]-peptidylproline (omega=180) = [protein]-peptidylproline (omega=0). Its function is as follows. Involved in protein export. Acts as a chaperone by maintaining the newly synthesized protein in an open conformation. Functions as a peptidyl-prolyl cis-trans isomerase. This chain is Trigger factor, found in Geobacter sulfurreducens (strain ATCC 51573 / DSM 12127 / PCA).